A 540-amino-acid polypeptide reads, in one-letter code: Chaperonin GroEL 3 (540 aa).

ATP is bound by residues 30–33 (TLGP), Lys51, 87–91 (DGTTT), Gly415, 479–481 (NAA), and Asp495.

Belongs to the chaperonin (HSP60) family. In terms of assembly, forms a cylinder of 14 subunits composed of two heptameric rings stacked back-to-back. Interacts with the co-chaperonin GroES.

It localises to the cytoplasm. The enzyme catalyses ATP + H2O + a folded polypeptide = ADP + phosphate + an unfolded polypeptide.. Its function is as follows. Together with its co-chaperonin GroES, plays an essential role in assisting protein folding. The GroEL-GroES system forms a nano-cage that allows encapsulation of the non-native substrate proteins and provides a physical environment optimized to promote and accelerate protein folding. This Burkholderia ambifaria (strain ATCC BAA-244 / DSM 16087 / CCUG 44356 / LMG 19182 / AMMD) (Burkholderia cepacia (strain AMMD)) protein is Chaperonin GroEL 3.